Here is a 482-residue protein sequence, read N- to C-terminus: Matrix metalloproteinase-20 (482 aa).

The N-terminal stretch at 1–21 (MKVLPASGLAVLVTALKFATA) is a signal peptide. Positions 22-106 (DPNLLAATPR…PRCGVPDVAN (85 aa)) are excised as a propeptide. The Cysteine switch signature appears at 97–104 (PRCGVPDV). Cys-99 lines the Zn(2+) pocket. Positions 163, 164, and 165 each coordinate Ca(2+). 2 residues coordinate Zn(2+): His-175 and Asp-177. Ca(2+)-binding residues include Asp-182, Gly-183, Arg-185, and Thr-187. Position 190 (His-190) interacts with Zn(2+). Ca(2+)-binding residues include Glu-196, Gly-197, Gly-199, and Asp-201. His-203 lines the Zn(2+) pocket. Residues Asp-205 and Glu-208 each coordinate Ca(2+). Position 225 (His-225) interacts with Zn(2+). The active site involves Glu-226. Residues His-229 and His-235 each coordinate Zn(2+). 4 Hemopexin repeats span residues 292–342 (PDLC…FPQL), 343–388 (MSNV…GFPR), 390–438 (VQRI…FSGV), and 439–482 (SGHI…WIGC). A disulfide bridge connects residues Cys-295 and Cys-482.

Belongs to the peptidase M10A family. Zn(2+) is required as a cofactor. The cofactor is Ca(2+). Autoactivates at least at the 106-Asn-|-Tyr-107 site. As to expression, expressed in the enamel organ.

The protein localises to the secreted. It localises to the extracellular space. The protein resides in the extracellular matrix. Its function is as follows. Degrades amelogenin, the major protein component of the enamel matrix and two of the macromolecules characterizing the cartilage extracellular matrix: aggrecan and the cartilage oligomeric matrix protein (COMP). May play a central role in tooth enamel formation. Cleaves aggrecan at the '360-Asn-|-Phe-361' site. This chain is Matrix metalloproteinase-20 (Mmp20), found in Mus musculus (Mouse).